The primary structure comprises 170 residues: Protein SOB FIVE-LIKE 5 (170 aa).

An SOFL-A motif is present at residues 10–15; the sequence is SGWTLY. The disordered stretch occupies residues 17–78; it reads DQSVSSPSPS…GPRNISEEDS (62 aa). Residues 35–44 are compositionally biased toward basic and acidic residues; that stretch reads DSRRRSKDSW. An SOFL-B motif is present at residues 61-70; the sequence is SMISDASSGP. A Nuclear localization signal motif is present at residues 79–86; it reads VKKINIVG.

It belongs to the SOFL plant protein family. In terms of tissue distribution, expressed in seedlings, roots, flowers and siliques. Barely detectable in leaves.

It localises to the cytoplasm. Its subcellular location is the nucleus. Involved in cytokinin-mediated development. This chain is Protein SOB FIVE-LIKE 5, found in Arabidopsis thaliana (Mouse-ear cress).